A 329-amino-acid chain; its full sequence is GMP reductase (329 aa).

The active-site Thioimidate intermediate is cysteine 178. Residue 207 to 230 (IIADGGIRNNGDIAKSIRFGATMC) participates in NADP(+) binding.

The protein belongs to the IMPDH/GMPR family. GuaC type 2 subfamily.

The catalysed reaction is IMP + NH4(+) + NADP(+) = GMP + NADPH + 2 H(+). In terms of biological role, catalyzes the irreversible NADPH-dependent deamination of GMP to IMP. It functions in the conversion of nucleobase, nucleoside and nucleotide derivatives of G to A nucleotides, and in maintaining the intracellular balance of A and G nucleotides. This Lacticaseibacillus casei (strain BL23) (Lactobacillus casei) protein is GMP reductase.